The sequence spans 245 residues: 3-deoxy-manno-octulosonate cytidylyltransferase (245 aa).

The protein belongs to the KdsB family.

Its subcellular location is the cytoplasm. The catalysed reaction is 3-deoxy-alpha-D-manno-oct-2-ulosonate + CTP = CMP-3-deoxy-beta-D-manno-octulosonate + diphosphate. It participates in nucleotide-sugar biosynthesis; CMP-3-deoxy-D-manno-octulosonate biosynthesis; CMP-3-deoxy-D-manno-octulosonate from 3-deoxy-D-manno-octulosonate and CTP: step 1/1. Its pathway is bacterial outer membrane biogenesis; lipopolysaccharide biosynthesis. Activates KDO (a required 8-carbon sugar) for incorporation into bacterial lipopolysaccharide in Gram-negative bacteria. In Elusimicrobium minutum (strain Pei191), this protein is 3-deoxy-manno-octulosonate cytidylyltransferase.